Here is a 668-residue protein sequence, read N- to C-terminus: Endoplasmic reticulum membrane-associated RNA degradation protein (668 aa).

A run of 2 helical transmembrane segments spans residues 378–398 (LLAFSVVLLLRFVDEGLLSVF) and 575–595 (VLSLILFLITLELVNVHAVCG).

It is found in the endoplasmic reticulum membrane. In terms of biological role, may play a role in neuronal migration during embryonic development. This is Endoplasmic reticulum membrane-associated RNA degradation protein (ERMARD) from Macaca fascicularis (Crab-eating macaque).